The following is a 291-amino-acid chain: Glycine--tRNA ligase alpha subunit (291 aa).

This sequence belongs to the class-II aminoacyl-tRNA synthetase family. In terms of assembly, tetramer of two alpha and two beta subunits.

It localises to the cytoplasm. It catalyses the reaction tRNA(Gly) + glycine + ATP = glycyl-tRNA(Gly) + AMP + diphosphate. This Coprothermobacter proteolyticus (strain ATCC 35245 / DSM 5265 / OCM 4 / BT) protein is Glycine--tRNA ligase alpha subunit.